Consider the following 281-residue polypeptide: NADPH-dependent 7-cyano-7-deazaguanine reductase (281 aa).

89-91 (VES) provides a ligand contact to substrate. 91–92 (SK) is an NADPH binding site. Catalysis depends on Cys188, which acts as the Thioimide intermediate. The active-site Proton donor is the Asp195. A substrate-binding site is contributed by 227–228 (HE). Residue 256–257 (RG) coordinates NADPH.

It belongs to the GTP cyclohydrolase I family. QueF type 2 subfamily. As to quaternary structure, homodimer.

It is found in the cytoplasm. The enzyme catalyses 7-aminomethyl-7-carbaguanine + 2 NADP(+) = 7-cyano-7-deazaguanine + 2 NADPH + 3 H(+). The protein operates within tRNA modification; tRNA-queuosine biosynthesis. Catalyzes the NADPH-dependent reduction of 7-cyano-7-deazaguanine (preQ0) to 7-aminomethyl-7-deazaguanine (preQ1). The polypeptide is NADPH-dependent 7-cyano-7-deazaguanine reductase (Azoarcus sp. (strain BH72)).